Consider the following 923-residue polypeptide: Leucine--tRNA ligase (923 aa).

The 'HIGH' region motif lies at 41–52 (PYPSGEGLHVGH). The short motif at 698–702 (KMSKS) is the 'KMSKS' region element. Lysine 701 serves as a coordination point for ATP.

It belongs to the class-I aminoacyl-tRNA synthetase family.

It localises to the cytoplasm. It catalyses the reaction tRNA(Leu) + L-leucine + ATP = L-leucyl-tRNA(Leu) + AMP + diphosphate. The protein is Leucine--tRNA ligase of Amoebophilus asiaticus (strain 5a2).